The primary structure comprises 977 residues: Synaptopodin 2-like protein (977 aa).

Residues glutamate 6 to alanine 88 form the PDZ domain. Disordered stretches follow at residues glycine 91–arginine 226, alanine 317–tryptophan 352, and alanine 364–leucine 677. Serine 108 and serine 111 each carry phosphoserine. Residues proline 109–leucine 123 are compositionally biased toward pro residues. Threonine 141 is modified (phosphothreonine). Phosphoserine is present on residues serine 143, serine 178, and serine 180. The span at glutamate 183–proline 192 shows a compositional bias: pro residues. Polar residues predominate over residues glutamine 194–serine 203. Residues glutamate 216–arginine 226 are compositionally biased toward low complexity. Phosphoserine occurs at positions 345, 350, 374, 381, and 384. Arginine 386 carries the post-translational modification Omega-N-methylarginine. A compositionally biased stretch (pro residues) spans proline 436–phenylalanine 450. Arginine 466, arginine 469, and arginine 479 each carry omega-N-methylarginine. Over residues leucine 510–valine 525 the composition is skewed to polar residues. 2 stretches are compositionally biased toward low complexity: residues proline 530–threonine 545 and serine 572–glutamate 595. Positions alanine 596 to proline 607 are enriched in pro residues. Residues serine 670 and serine 678 each carry the phosphoserine modification. The segment at threonine 697 to serine 802 is disordered. A compositionally biased stretch (pro residues) spans lysine 704–proline 730. Residues threonine 705 and threonine 713 each carry the phosphothreonine modification. An Omega-N-methylarginine modification is found at arginine 757. Residues glycine 781–proline 796 are compositionally biased toward pro residues. Serine 788 and serine 790 each carry phosphoserine. Residue threonine 792 is modified to Phosphothreonine. An omega-N-methylarginine mark is found at arginine 806, arginine 826, and arginine 889. Serine 891 is subject to Phosphoserine. Phosphothreonine is present on residues threonine 892 and threonine 898. Omega-N-methylarginine is present on arginine 910. Asymmetric dimethylarginine; alternate is present on arginine 921. Arginine 921 carries the omega-N-methylarginine; alternate modification. The tract at residues threonine 922–glycine 950 is disordered. Residues valine 929–alanine 938 show a composition bias toward pro residues. An omega-N-methylarginine mark is found at arginine 955 and arginine 957.

It belongs to the synaptopodin family.

It is found in the cytoplasm. The protein localises to the cytoskeleton. Its function is as follows. Actin-associated protein that may play a role in modulating actin-based shape. The protein is Synaptopodin 2-like protein (SYNPO2L) of Homo sapiens (Human).